We begin with the raw amino-acid sequence, 136 residues long: Large ribosomal subunit protein uL16 (136 aa).

Belongs to the universal ribosomal protein uL16 family. Part of the 50S ribosomal subunit.

Its function is as follows. Binds 23S rRNA and is also seen to make contacts with the A and possibly P site tRNAs. This Yersinia enterocolitica serotype O:8 / biotype 1B (strain NCTC 13174 / 8081) protein is Large ribosomal subunit protein uL16.